Consider the following 186-residue polypeptide: TATA box-binding protein-like 1 (186 aa).

This sequence belongs to the TBP family. As to expression, expressed ubiquitously with highest expression in the ovary and testis.

The protein resides in the cytoplasm. It is found in the nucleus. Functionally, part of a specialized transcription system that mediates the transcription of most ribosomal proteins through the 5'-TCT-3' motif which is a core promoter element at these genes. Seems to also mediate the transcription of NF1. Does not bind the TATA box. Members of the TBP family are differentially required to regulate transcription and development during early embryogenesis. Particularly regulates genes that have a role in catabolism. In Xenopus laevis (African clawed frog), this protein is TATA box-binding protein-like 1 (tbpl1).